The following is a 232-amino-acid chain: Octanoyltransferase (232 aa).

The BPL/LPL catalytic domain maps to 44–219 (EYTADEIWVV…QLARQFGLVL (176 aa)). Substrate-binding positions include 83–90 (RGGQVTYH), 150–152 (ALG), and 163–165 (GLS). Catalysis depends on C181, which acts as the Acyl-thioester intermediate.

Belongs to the LipB family.

The protein resides in the cytoplasm. It carries out the reaction octanoyl-[ACP] + L-lysyl-[protein] = N(6)-octanoyl-L-lysyl-[protein] + holo-[ACP] + H(+). The protein operates within protein modification; protein lipoylation via endogenous pathway; protein N(6)-(lipoyl)lysine from octanoyl-[acyl-carrier-protein]: step 1/2. Functionally, catalyzes the transfer of endogenously produced octanoic acid from octanoyl-acyl-carrier-protein onto the lipoyl domains of lipoate-dependent enzymes. Lipoyl-ACP can also act as a substrate although octanoyl-ACP is likely to be the physiological substrate. In Xanthomonas axonopodis pv. citri (strain 306), this protein is Octanoyltransferase.